Here is a 141-residue protein sequence, read N- to C-terminus: Hemoglobin subunit alpha-A (141 aa).

The Globin domain occupies 1-141 (VLSASDKSNV…VGTVLTAKYR (141 aa)). His58 is an O2 binding site. Residue His87 coordinates heme b.

It belongs to the globin family. Heterotetramer of two alpha chains and two beta chains. In terms of tissue distribution, red blood cells.

Involved in oxygen transport from the lung to the various peripheral tissues. This Streptopelia orientalis (Eastern turtle dove) protein is Hemoglobin subunit alpha-A (HBAA).